Reading from the N-terminus, the 469-residue chain is Exodeoxyribonuclease 7 large subunit (469 aa).

This sequence belongs to the XseA family. In terms of assembly, heterooligomer composed of large and small subunits.

It localises to the cytoplasm. It carries out the reaction Exonucleolytic cleavage in either 5'- to 3'- or 3'- to 5'-direction to yield nucleoside 5'-phosphates.. In terms of biological role, bidirectionally degrades single-stranded DNA into large acid-insoluble oligonucleotides, which are then degraded further into small acid-soluble oligonucleotides. The protein is Exodeoxyribonuclease 7 large subunit of Mycoplasma mycoides subsp. mycoides SC (strain CCUG 32753 / NCTC 10114 / PG1).